The sequence spans 521 residues: Glucose-1-phosphate adenylyltransferase large subunit 3, chloroplastic (521 aa).

A chloroplast-targeting transit peptide spans 1 to 61 (MDSCCNFSLG…RKLRPGVAYA (61 aa)).

It belongs to the bacterial/plant glucose-1-phosphate adenylyltransferase family. In terms of assembly, heterotetramer. As to expression, probably are expressed in roots, flowers and/or seeds.

It localises to the plastid. The protein localises to the chloroplast. It carries out the reaction alpha-D-glucose 1-phosphate + ATP + H(+) = ADP-alpha-D-glucose + diphosphate. The protein operates within glycan biosynthesis; starch biosynthesis. With respect to regulation, activated by 3'phosphoglycerate, inhibited by orthophosphate. Allosteric regulation. In terms of biological role, this protein plays a role in synthesis of starch. It catalyzes the synthesis of the activated glycosyl donor, ADP-glucose from Glc-1-P and ATP. The polypeptide is Glucose-1-phosphate adenylyltransferase large subunit 3, chloroplastic (APL3) (Arabidopsis thaliana (Mouse-ear cress)).